Here is a 573-residue protein sequence, read N- to C-terminus: Urease subunit alpha 2 (573 aa).

Positions 135-573 constitute a Urease domain; it reads GGMDTHVHYI…ISLNQLYFFS (439 aa). Positions 140, 142, and 223 each coordinate Ni(2+). The residue at position 223 (K223) is an N6-carboxylysine. H225 lines the substrate pocket. The Ni(2+) site is built by H252 and H278. H326 (proton donor) is an active-site residue. D366 lines the Ni(2+) pocket.

Belongs to the metallo-dependent hydrolases superfamily. Urease alpha subunit family. Heterotrimer of UreA (gamma), UreB (beta) and UreC (alpha) subunits. Three heterotrimers associate to form the active enzyme. The cofactor is Ni cation. Post-translationally, carboxylation allows a single lysine to coordinate two nickel ions.

The protein localises to the cytoplasm. It carries out the reaction urea + 2 H2O + H(+) = hydrogencarbonate + 2 NH4(+). The protein operates within nitrogen metabolism; urea degradation; CO(2) and NH(3) from urea (urease route): step 1/1. Its function is as follows. Disrupting the ure2 operon has no effect on urease activity, or pathogen survival in BALB/c mice when inoculated by gavage, but confers slightly enhanced resistance to low pH killing in vitro. The protein is Urease subunit alpha 2 of Brucella suis biovar 1 (strain 1330).